The following is a 273-amino-acid chain: Outer surface protein A (273 aa).

The first 16 residues, 1–16 (MKKYLLGIGLILALIA), serve as a signal peptide directing secretion. Cys-17 carries the N-palmitoyl cysteine lipid modification. Cys-17 carries S-diacylglycerol cysteine lipidation.

Belongs to the OspA lipoprotein family.

It is found in the cell outer membrane. The protein localises to the cell surface. This Borreliella burgdorferi (Lyme disease spirochete) protein is Outer surface protein A.